Consider the following 315-residue polypeptide: Rab effector Noc2 (315 aa).

The region spanning 41–158 is the RabBD domain; sequence QRRKQHLSPA…KRSGAWFYKG (118 aa). Residues 89-146 form an FYVE-type zinc finger; sequence GNGLSQCLLCGEVLGFLGSSSVFCKDCRKKVCTKCGIEASPGQKRPLWLCKICSEQRE. Zn(2+) contacts are provided by Cys95, Cys98, Cys112, Cys115, Cys120, Cys123, Cys138, and Cys141. Residues 170 to 315 form a disordered region; the sequence is GRADDPHFRP…APAGPSSCLG (146 aa). 2 stretches are compositionally biased toward basic and acidic residues: residues 184–193 and 221–240; these read PAEREPRSSE and LEDRLPSTGVRDRKGDKPWK. A compositionally biased stretch (polar residues) spans 262 to 275; the sequence is GCQSSLASGETGTG. Positions 298–315 are enriched in low complexity; the sequence is GRAPAADAAPAGPSSCLG.

As to quaternary structure, recruited to dense-core vesicles through specific interaction with RAB27A in endocrine cells. Interacts with RAB3A, RAB3B, RAB3C and RAB3D. Interacts with ZYX. As to expression, moderate to high levels of expression in thyroid, ovary, stomach, heart, pancreas, skeletal muscle, kidney and liver. Also detected in epithelial cells.

Its subcellular location is the cytoplasm. It is found in the cytoplasmic vesicle. The protein localises to the secretory vesicle membrane. Rab GTPase effector involved in the late steps of regulated exocytosis, both in endocrine and exocrine cells. Acts as a potential RAB3B effector protein in epithelial cells. The protein is Rab effector Noc2 (RPH3AL) of Homo sapiens (Human).